The chain runs to 201 residues: Recombination protein RecR (201 aa).

The C4-type zinc-finger motif lies at 60–75 (CSRCGNVDTVDPCIVC). The 96-residue stretch at 83 to 178 (SVIIVVEDVS…KITRLAHGVP (96 aa)) folds into the Toprim domain.

It belongs to the RecR family.

In terms of biological role, may play a role in DNA repair. It seems to be involved in an RecBC-independent recombinational process of DNA repair. It may act with RecF and RecO. In Rhizobium johnstonii (strain DSM 114642 / LMG 32736 / 3841) (Rhizobium leguminosarum bv. viciae), this protein is Recombination protein RecR.